Reading from the N-terminus, the 635-residue chain is Peptidyl-prolyl cis-trans isomerase PASTICCINO1 (635 aa).

Residues 1-10 (MAVGDQTEQN) show a composition bias toward polar residues. The segment at 1 to 28 (MAVGDQTEQNYLPKKKKSETEDDKRRKK) is disordered. PPIase FKBP-type domains are found at residues 51–147 (GDQV…LDFS), 175–260 (PYEV…VHFI), and 291–383 (DSRL…LGFE). TPR repeat units lie at residues 400–433 (ADKIRSTGNRLFKEGKFELAKAKYEKVLREFNHV), 449–482 (NMLHLNVAACLLKMGEWRKSIETCNKVLEAKPGH), and 483–516 (VKGLYRRGMAYIAGGEYDDARNDFNMMIKVDKSS). Positions 530-546 (KEQEAESKARKQFKGLF) are calmodulin-binding. Acidic residues predominate over residues 569–586 (EVDETKDNDDDETLEEEG). A disordered region spans residues 569–593 (EVDETKDNDDDETLEEEGATTVSTE). A helical; Anchor for type IV membrane protein membrane pass occupies residues 609-629 (VMLQIGIQLGVVLIGILIFQF).

This sequence belongs to the FKBP-type PPIase family. In terms of assembly, interacts with calmodulin (CaM). Interacts with RPM1 and NAC089. Interacts with the elongase complex core members KCR1, PAS2 and CER10. In terms of tissue distribution, expressed ubiquitously.

It localises to the endoplasmic reticulum membrane. Its subcellular location is the cytoplasm. The protein resides in the nucleus. The catalysed reaction is [protein]-peptidylproline (omega=180) = [protein]-peptidylproline (omega=0). In terms of biological role, PPIases accelerate the folding of proteins. It catalyzes the cis-trans isomerization of proline imidic peptide bonds in oligopeptides. Essential protein regulating cell division, adhesion and elongation throughout the plant development and embryogenesis. Required for the spatial organization of apical meristems. Involved in the hormonal control of cell division and differentiation mediated by cytokinins and auxin. Regulates the function of NAC089 transcription factor by controlling its targeting to the nucleus upon plant cell division. Interacts with enzymes of the fatty acid elongase complex and favors the generation of very-long-chain fatty acids (VLCFAs) required for polar auxin transport and tissue patterning during plant development. This is Peptidyl-prolyl cis-trans isomerase PASTICCINO1 (PAS1) from Arabidopsis thaliana (Mouse-ear cress).